Reading from the N-terminus, the 190-residue chain is Elongation factor P-like protein (190 aa).

This sequence belongs to the elongation factor P family.

This chain is Elongation factor P-like protein, found in Pseudoalteromonas atlantica (strain T6c / ATCC BAA-1087).